A 417-amino-acid chain; its full sequence is UDP-N-acetylglucosamine 1-carboxyvinyltransferase (417 aa).

Phosphoenolpyruvate is bound at residue 22-23 (KN). Arg93 contributes to the UDP-N-acetyl-alpha-D-glucosamine binding site. Cys117 (proton donor) is an active-site residue. Position 117 is a 2-(S-cysteinyl)pyruvic acid O-phosphothioketal (Cys117). UDP-N-acetyl-alpha-D-glucosamine contacts are provided by residues 122 to 126 (RPVDQ), Asp304, and Ile326.

The protein belongs to the EPSP synthase family. MurA subfamily.

It is found in the cytoplasm. The enzyme catalyses phosphoenolpyruvate + UDP-N-acetyl-alpha-D-glucosamine = UDP-N-acetyl-3-O-(1-carboxyvinyl)-alpha-D-glucosamine + phosphate. It functions in the pathway cell wall biogenesis; peptidoglycan biosynthesis. Its function is as follows. Cell wall formation. Adds enolpyruvyl to UDP-N-acetylglucosamine. The chain is UDP-N-acetylglucosamine 1-carboxyvinyltransferase from Neisseria meningitidis serogroup A / serotype 4A (strain DSM 15465 / Z2491).